Reading from the N-terminus, the 329-residue chain is tRNA-modifying protein YgfZ (329 aa).

Residues Trp-28 and Trp-188 each contribute to the folate site.

Belongs to the tRNA-modifying YgfZ family.

It localises to the cytoplasm. Folate-binding protein involved in regulating the level of ATP-DnaA and in the modification of some tRNAs. It is probably a key factor in regulatory networks that act via tRNA modification, such as initiation of chromosomal replication. The polypeptide is tRNA-modifying protein YgfZ (Photorhabdus laumondii subsp. laumondii (strain DSM 15139 / CIP 105565 / TT01) (Photorhabdus luminescens subsp. laumondii)).